The sequence spans 76 residues: MDLETRVSGHEKPKKEIRRIPDCQYAKTRSSPCEPLWGLEEAASRTSAGSWAHQDGLGDSSLFEIHGNQAITGSHQ.

Functionally, plays a role in viral replication. The polypeptide is uORF2 protein (Zika virus (isolate ZIKV/Human/French Polynesia/10087PF/2013) (ZIKV)).